We begin with the raw amino-acid sequence, 757 residues long: Cellulose synthase-like protein B1 (757 aa).

2 helical membrane-spanning segments follow: residues 18 to 38 (TNYF…SLLL) and 50 to 70 (VWLV…LITC). The active site involves Asp136. Positions 186-216 (EFNRDWEKTKREYEKLRRKVEDATGDSHMLD) form a coiled coil. The active site involves Asp462. 6 helical membrane-spanning segments follow: residues 533–553 (LAYL…YCLL), 569–589 (LYLG…LWEF), 615–635 (LFSI…VFII), 674–694 (FLPG…FSVG), 710–730 (AEAC…MGLF), and 737–757 (TPLS…VFSV).

It belongs to the glycosyltransferase 2 family. Plant cellulose synthase-like B subfamily. As to expression, expressed in young seedlings, primarily in the vascular tissue.

It is found in the golgi apparatus membrane. Its function is as follows. Thought to be a Golgi-localized beta-glycan synthase that polymerize the backbones of noncellulosic polysaccharides (hemicelluloses) of plant cell wall. The protein is Cellulose synthase-like protein B1 (CSLB1) of Arabidopsis thaliana (Mouse-ear cress).